Consider the following 254-residue polypeptide: Transcription factor CAULIFLOWER (254 aa).

The 61-residue stretch at 1-61 folds into the MADS-box domain; sequence MGRGRVEMKR…GKLFEYSSES (61 aa). A K-box domain is found at 90–180; the sequence is QTNWSMEYSR…TKQIKERESI (91 aa). A compositionally biased stretch (polar residues) spans 182–191; that stretch reads RTHQNQSEQQ. The tract at residues 182–205 is disordered; sequence RTHQNQSEQQNRSHHVAPQPQPQL.

In terms of assembly, homodimer capable of binding to CArG-box sequences.

Its subcellular location is the nucleus. Probable transcription factor that promotes early floral meristem identity in synergy with APETALA1, FRUITFULL and LEAFY. Is required subsequently for the transition of an inflorescence meristem into a floral meristem. Seems to be partially redundant to the function of APETALA1. This chain is Transcription factor CAULIFLOWER (CAL), found in Brassica rapa subsp. chinensis (Pak-choi).